Here is a 233-residue protein sequence, read N- to C-terminus: MAKISKRINKIREGVDRNKLYDLSAAIGLVKERAVAKFDETIEIAMNLGVDPRHADQMVRGVVNLPNGTGRTVRVAVFARGDKAEEAKKAGADIVGAEELFEIVNGGKIDFDRCIATPDMMPLVGRLGKVLGPRGMMPNPKVGTVTTDVAAAVAASKGGAVEFRVEKAGIIHAGIGKVSFDNAKLEENIKAFADAVIKAKPSAAKGEYVKRVSLSSTMGVGVKVDPATVKVVA.

This sequence belongs to the universal ribosomal protein uL1 family. In terms of assembly, part of the 50S ribosomal subunit.

In terms of biological role, binds directly to 23S rRNA. The L1 stalk is quite mobile in the ribosome, and is involved in E site tRNA release. Functionally, protein L1 is also a translational repressor protein, it controls the translation of the L11 operon by binding to its mRNA. The chain is Large ribosomal subunit protein uL1 from Brucella anthropi (strain ATCC 49188 / DSM 6882 / CCUG 24695 / JCM 21032 / LMG 3331 / NBRC 15819 / NCTC 12168 / Alc 37) (Ochrobactrum anthropi).